The following is a 156-amino-acid chain: Transcriptional repressor NrdR (156 aa).

A zinc finger lies at 3–34; that stretch reads CPYCGHLDNKVIDSRINKDATITRRRRSCLAC. The ATP-cone domain occupies 49–139; that stretch reads PMLVKKDGRR…VYRQFKDVDE (91 aa).

Belongs to the NrdR family. It depends on Zn(2+) as a cofactor.

In terms of biological role, negatively regulates transcription of bacterial ribonucleotide reductase nrd genes and operons by binding to NrdR-boxes. The polypeptide is Transcriptional repressor NrdR (Desulfotalea psychrophila (strain LSv54 / DSM 12343)).